A 255-amino-acid polypeptide reads, in one-letter code: Pre-miRNA 5'-monophosphate methyltransferase (255 aa).

Residues R32, N66, D96, 121–122 (DI), and M150 contribute to the S-adenosyl-L-methionine site. The Bin3-type SAM domain occupies 41–253 (LHKLFRKPAE…SLLLFKIQRH (213 aa)).

This sequence belongs to the methyltransferase superfamily.

The protein resides in the cytoplasm. The catalysed reaction is a 5'-end 5'-phospho-ribonucleoside-RNA + S-adenosyl-L-methionine = a 5'-end (5'-methylphospho)-ribonucleoside-RNA + S-adenosyl-L-homocysteine. The enzyme catalyses a 5'-end 5'-phospho-ribonucleoside-RNA + 2 S-adenosyl-L-methionine = a 5'-end (5'-bismethylphospho)-ribonucleoside-RNA + 2 S-adenosyl-L-homocysteine. Its function is as follows. O-methyltransferase that specifically monomethylates 5'-monophosphate of cytoplasmic histidyl tRNA (tRNA(His)), acting as a capping enzyme by protecting tRNA(His) from cleavage by DICER1. Also able, with less efficiently, to methylate the 5' monophosphate of a subset of pre-miRNAs, acting as a negative regulator of miRNA processing. The 5' monophosphate of pre-miRNAs is recognized by DICER1 and is required for pre-miRNAs processing: methylation at this position reduces the processing of pre-miRNAs by DICER1. Was also reported to mediate dimethylation of pre-miR-145; however dimethylation cannot be reproduced by another group which observes a monomethylation of pre-miR-145. The sequence is that of Pre-miRNA 5'-monophosphate methyltransferase (bcdin3d) from Xenopus laevis (African clawed frog).